A 257-amino-acid polypeptide reads, in one-letter code: Phosphonates import ATP-binding protein PhnC (257 aa).

The 245-residue stretch at 4–248 folds into the ABC transporter domain; the sequence is IEFKNVSKVY…IFSEIYGRTI (245 aa). 37–44 contacts ATP; sequence GLSGAGKS.

It belongs to the ABC transporter superfamily. Phosphonates importer (TC 3.A.1.9.1) family. As to quaternary structure, the complex is composed of two ATP-binding proteins (PhnC), two transmembrane proteins (PhnE) and a solute-binding protein (PhnD).

The protein resides in the cell membrane. It carries out the reaction phosphonate(out) + ATP + H2O = phosphonate(in) + ADP + phosphate + H(+). Functionally, part of the ABC transporter complex PhnCDE involved in phosphonates import. Responsible for energy coupling to the transport system. This is Phosphonates import ATP-binding protein PhnC from Staphylococcus aureus (strain bovine RF122 / ET3-1).